We begin with the raw amino-acid sequence, 448 residues long: uncharacterized protein (448 aa).

The helical transmembrane segment at 19 to 41 threads the bilayer; that stretch reads LGLLVPFLLLLFSCTNTVGYGVL. The SH3b domain maps to 105-181; that stretch reads YSYATSVLDG…CFSHGLSLFD (77 aa).

It is found in the membrane. This is an uncharacterized protein from Treponema pallidum (strain Nichols).